The chain runs to 72 residues: Small ribosomal subunit protein bS18 (72 aa).

Belongs to the bacterial ribosomal protein bS18 family. In terms of assembly, part of the 30S ribosomal subunit. Forms a tight heterodimer with protein bS6.

Its function is as follows. Binds as a heterodimer with protein bS6 to the central domain of the 16S rRNA, where it helps stabilize the platform of the 30S subunit. The polypeptide is Small ribosomal subunit protein bS18 (Francisella tularensis subsp. holarctica (strain OSU18)).